A 348-amino-acid polypeptide reads, in one-letter code: Ileal sodium/bile acid cotransporter (348 aa).

The Extracellular portion of the chain corresponds to 1–28; that stretch reads MNDPNSCVDNATVCSGASCVVPESNFNN. N10 is a glycosylation site (N-linked (GlcNAc...) asparagine). The chain crosses the membrane as a helical span at residues 29 to 49; the sequence is ILSVVLSTVLTILLALVMFSM. Residues 50–82 are Cytoplasmic-facing; that stretch reads GCNVEIKKFLGHIKRPWGICVGFLCQFGIMPLT. A helical transmembrane segment spans residues 83-103; the sequence is GFILSVAFDILPLQAVVVLII. Topologically, residues 104–126 are extracellular; sequence GCCPGGTASNILAYWVDGDMDLS. The helical transmembrane segment at 127-147 threads the bilayer; it reads VSMTTCSTLLALGMMPLCLLI. Topologically, residues 148-157 are cytoplasmic; the sequence is YTKMWVDSGS. Residues 158-178 form a helical membrane-spanning segment; it reads IVIPYDNIGTSLVSLVVPVSI. The Extracellular portion of the chain corresponds to 179–195; the sequence is GMFVNHKWPQKAKIILK. A helical membrane pass occupies residues 196 to 216; that stretch reads IGSIAGAILIVLIAVVGGILY. Residues 217-224 lie on the Cytoplasmic side of the membrane; that stretch reads QSAWIIAP. Residues 225–245 form a helical membrane-spanning segment; sequence KLWIIGTIFPVAGYSLGFLLA. Residues 246 to 284 are Extracellular-facing; that stretch reads RIAGLPWYRCRTVAFETGMQNTQLCSTIVQLSFTPEELN. A helical transmembrane segment spans residues 285 to 305; it reads VVFTFPLIYSIFQLAFAAIFL. Topologically, residues 306–348 are cytoplasmic; that stretch reads GFYVAYKKCHGKNKAEIPESKENGTEPESSFYKANGGFQPDEK. Over residues 320-329 the composition is skewed to basic and acidic residues; that stretch reads AEIPESKENG. The interval 320–348 is disordered; sequence AEIPESKENGTEPESSFYKANGGFQPDEK. At S335 the chain carries Phosphoserine.

It belongs to the bile acid:sodium symporter (BASS) (TC 2.A.28) family. Monomer and homodimer. In terms of tissue distribution, mainly expressed in ileum and kidney, lower expression in cecum.

The protein resides in the membrane. The catalysed reaction is taurocholate(out) + 2 Na(+)(out) = taurocholate(in) + 2 Na(+)(in). It carries out the reaction cholate(out) + 2 Na(+)(out) = cholate(in) + 2 Na(+)(in). It catalyses the reaction taurochenodeoxycholate(out) + 2 Na(+)(out) = taurochenodeoxycholate(in) + 2 Na(+)(in). The enzyme catalyses tauroursodeoxycholate(out) + 2 Na(+)(out) = tauroursodeoxycholate(in) + 2 Na(+)(in). The catalysed reaction is glycocholate(out) + 2 Na(+)(out) = glycocholate(in) + 2 Na(+)(in). It carries out the reaction tauronorcholate(out) + 2 Na(+)(out) = tauronorcholate(in) + 2 Na(+)(in). It catalyses the reaction tauroallocholate(out) + 2 Na(+)(out) = tauroallocholate(in) + 2 Na(+)(in). The enzyme catalyses taurodeoxycholate(out) + 2 Na(+)(out) = taurodeoxycholate(in) + 2 Na(+)(in). The catalysed reaction is tauro-beta-muricholate(out) + 2 Na(+)(out) = tauro-beta-muricholate(in) + 2 Na(+)(in). Functionally, plays a critical role in the sodium-dependent reabsorption of bile acids from the lumen of the small intestine. Transports various bile acids, unconjugated or conjugated, such as cholate and taurocholate. Also responsible for bile acid transport in the renal proximal tubules, a salvage mechanism that helps conserve bile acids. Works collaboratively with the Na(+)-taurocholate cotransporting polypeptide (NTCP), the organic solute transporter (OST), and the bile salt export pump (BSEP), to ensure efficacious biological recycling of bile acids during enterohepatic circulation. This chain is Ileal sodium/bile acid cotransporter (SLC10A2), found in Homo sapiens (Human).